Here is a 440-residue protein sequence, read N- to C-terminus: Cytochrome b (440 aa).

The helical transmembrane segment at 46-66 (IWGIVLAFCLVLQIATGIVLV) threads the bilayer. Heme b contacts are provided by His97 and His111. 9 helical membrane-spanning segments follow: residues 100 to 120 (GASL…YYGS), 129 to 149 (WIVG…GYVL), 156 to 176 (FWGA…GEAI), 194 to 214 (FFSL…VHIW), 253 to 273 (LFAL…MPNY), 296 to 315 (WYFL…VWVV), 330 to 350 (FFGV…PWLD), 365 to 385 (WWFW…AMPA), and 394 to 414 (LAGS…LGII). Heme b contacts are provided by His198 and His212.

Belongs to the cytochrome b family. The main subunits of complex b-c1 are: cytochrome b, cytochrome c1 and the Rieske protein. The cofactor is heme b.

The protein resides in the cell membrane. Its function is as follows. Component of the ubiquinol-cytochrome c reductase complex (complex III or cytochrome b-c1 complex), which is a respiratory chain that generates an electrochemical potential coupled to ATP synthesis. This Paracoccus denitrificans protein is Cytochrome b (petB).